Here is a 349-residue protein sequence, read N- to C-terminus: Phosphoribosylformylglycinamidine cyclo-ligase (349 aa).

Belongs to the AIR synthase family.

It localises to the cytoplasm. The catalysed reaction is 2-formamido-N(1)-(5-O-phospho-beta-D-ribosyl)acetamidine + ATP = 5-amino-1-(5-phospho-beta-D-ribosyl)imidazole + ADP + phosphate + H(+). The protein operates within purine metabolism; IMP biosynthesis via de novo pathway; 5-amino-1-(5-phospho-D-ribosyl)imidazole from N(2)-formyl-N(1)-(5-phospho-D-ribosyl)glycinamide: step 2/2. The sequence is that of Phosphoribosylformylglycinamidine cyclo-ligase from Lactobacillus helveticus (strain DPC 4571).